Reading from the N-terminus, the 273-residue chain is MGQKLSGSLKSVEVREPALRPAKRELRGLEPGRPARLDQLLDMPAAGLAVQLRHAWNPEDRSLNVFVKDDDRLTFHRHPVAQSTDGIRGKVGHARGLHAWQIHWPARQRGTHAVVGVATARAPLHSVGYTALVGSDSESWGWDLGRSRLYHDGKNRPGVAYPAFLGPDEAFALPDSLLVVLDMDEGTLSFIVDGQYLGVAFRGLKGKKLYPVVSAVWGHCEVTMRYINGLDPEPLPLMDLCRRSIRSALGRQRLRDIGSLPLPQSLKNYLQYQ.

Residues 34–233 form the B30.2/SPRY domain; that stretch reads PARLDQLLDM…MRYINGLDPE (200 aa). Positions 234-273 constitute an SOCS box domain; sequence PLPLMDLCRRSIRSALGRQRLRDIGSLPLPQSLKNYLQYQ.

The protein belongs to the SPSB family. As to quaternary structure, component of the probable ECS(SPSB4) E3 ubiquitin-protein ligase complex which contains CUL5, RNF7/RBX2, Elongin BC complex and SPSB4. Interacts with CUL5; RNF7; ELOB and ELOC. Interacts with MET. Interacts (via B30.2/SPRY domain) with PAWR; this interaction occurs in association with the Elongin BC complex. Interacts with NOS2. Interacts with EPHB2.

The protein resides in the cytoplasm. It is found in the cytosol. The protein operates within protein modification; protein ubiquitination. Its function is as follows. Substrate recognition component of a SCF-like ECS (Elongin BC-CUL2/5-SOCS-box protein) E3 ubiquitin-protein ligase complex which mediates the ubiquitination and subsequent proteasomal degradation of target proteins. Negatively regulates nitric oxide (NO) production and limits cellular toxicity in activated macrophages by mediating the ubiquitination and proteasomal degradation of NOS2. Acts as a bridge which links NOS2 with the ECS E3 ubiquitin ligase complex components ELOC and CUL5. Diminishes EphB2-dependent cell repulsive responses by mediating the ubiquitination and degradation of the EphB2/CTF2. Regulates cellular clock function by mediating ubiquitination and proteasomal degradation of the circadian transcriptional repressor NR1D1. The sequence is that of SPRY domain-containing SOCS box protein 4 (Spsb4) from Mus musculus (Mouse).